The chain runs to 179 residues: Large ribosomal subunit protein uL5 (179 aa).

This sequence belongs to the universal ribosomal protein uL5 family. In terms of assembly, part of the 50S ribosomal subunit; part of the 5S rRNA/L5/L18/L25 subcomplex. Contacts the 5S rRNA and the P site tRNA. Forms a bridge to the 30S subunit in the 70S ribosome.

In terms of biological role, this is one of the proteins that bind and probably mediate the attachment of the 5S RNA into the large ribosomal subunit, where it forms part of the central protuberance. In the 70S ribosome it contacts protein S13 of the 30S subunit (bridge B1b), connecting the 2 subunits; this bridge is implicated in subunit movement. Contacts the P site tRNA; the 5S rRNA and some of its associated proteins might help stabilize positioning of ribosome-bound tRNAs. The protein is Large ribosomal subunit protein uL5 of Burkholderia multivorans (strain ATCC 17616 / 249).